Consider the following 427-residue polypeptide: Mitochondrial fission protein ELM1 (427 aa).

Interacts with DRP3 and DRP3B.

It is found in the mitochondrion outer membrane. In terms of biological role, plant-specific factor involved in mitochondria fission. Is required for the correct localization of DRP3A from the cytosol to mitochondrial fission sites. Does not seem to be required for peroxisomal division. The chain is Mitochondrial fission protein ELM1 (ELM1) from Arabidopsis thaliana (Mouse-ear cress).